The primary structure comprises 153 residues: Ribosome maturation factor RimP (153 aa).

This sequence belongs to the RimP family.

It localises to the cytoplasm. Required for maturation of 30S ribosomal subunits. This is Ribosome maturation factor RimP from Coxiella burnetii (strain Dugway 5J108-111).